Consider the following 657-residue polypeptide: Pyoverdine export ATP-binding/permease protein PvdT (657 aa).

The ABC transporter domain maps to 6-245 (IDLRGIRKSY…RSVNPAALQA (240 aa)). 43–50 (GASGSGKS) contributes to the ATP binding site. A run of 4 helical transmembrane segments spans residues 285–305 (ALTLLGIVIGVASVVVMLAVG), 539–559 (IAAISLLVGGIGVMNIMLMTV), 590–610 (LSVVGGLAGIVLALGMGAALL), and 620–640 (LPAVAGAFACALITGVIFGFM).

The protein belongs to the ABC transporter superfamily. Macrolide exporter (TC 3.A.1.122) family. Part of the tripartite efflux system PvdRT-OpmQ, which is composed of an inner membrane component with both ATPase and permease domains, PvdT, a periplasmic membrane fusion protein, PvdR, and an outer membrane component, OpmQ.

The protein localises to the cell inner membrane. In terms of biological role, part of the tripartite efflux system PvdRT-OpmQ required for the secretion into the extracellular milieu of the siderophore pyoverdine (PVD), which is involved in iron acquisition. This subunit binds PVD and drives its secretion by hydrolyzing ATP. The system is responsible for export of newly synthesized PVD after the final steps of biosynthesis have taken place in the periplasm. It is also responsible for recycling of PVD after internalization of ferri-PVD into the periplasm by the outer-membrane receptor FpvA and release of iron from PVD, thus making PVD available for new cycles of iron uptake. This is Pyoverdine export ATP-binding/permease protein PvdT from Pseudomonas syringae pv. syringae (strain B728a).